The following is a 223-amino-acid chain: ATP-dependent dethiobiotin synthetase BioD (223 aa).

Position 11–16 (11–16 (DIGKTY)) interacts with ATP. T15 serves as a coordination point for Mg(2+). The active site involves K36. Residue T40 participates in substrate binding. Residues D50, 110-113 (EGAG), and 174-175 (NN) contribute to the ATP site. Positions 50 and 110 each coordinate Mg(2+).

It belongs to the dethiobiotin synthetase family. Homodimer. Mg(2+) serves as cofactor.

It is found in the cytoplasm. It carries out the reaction (7R,8S)-7,8-diammoniononanoate + CO2 + ATP = (4R,5S)-dethiobiotin + ADP + phosphate + 3 H(+). Its pathway is cofactor biosynthesis; biotin biosynthesis; biotin from 7,8-diaminononanoate: step 1/2. Functionally, catalyzes a mechanistically unusual reaction, the ATP-dependent insertion of CO2 between the N7 and N8 nitrogen atoms of 7,8-diaminopelargonic acid (DAPA, also called 7,8-diammoniononanoate) to form a ureido ring. This is ATP-dependent dethiobiotin synthetase BioD from Staphylococcus epidermidis (strain ATCC 35984 / DSM 28319 / BCRC 17069 / CCUG 31568 / BM 3577 / RP62A).